The sequence spans 682 residues: Iron-phytosiderophore transporter yellow stripe 1 (682 aa).

Residues 1 to 36 are disordered; it reads MDLARRGGAAGADDEGEIERHEPAPEDMESDPAAAR. The next 15 membrane-spanning stretches (helical) occupy residues 56–76, 79–99, 124–144, 167–187, 236–256, 288–308, 334–354, 396–416, 428–448, 460–480, 514–534, 549–569, 574–594, 612–632, and 640–660; these read GVVAALLIGFMYSVIVMKIAL, GLVPTLNVSAALMAFLALRGW, CAVACYTIAFGGGFGSTLLGL, GFGWMAGFVAAISFAGLLSLI, LSFVWSFFQWFYTGGEVCGFV, LVNISTLLGAILSWGILWPLI, FLCIALIMGDGTYHFFKVFGV, FPAWAAYAGYAALTVVSAVII, VIVAYVLAPLLGFANSYGTGL, IALFIFAAWAGRDNGVIAGLA, VAQFIGTAMGCVVAPLTFLLF, APYGLIYRNMAILGVEGFSVL, LALSAGFFAFAFVFSVARDVL, FLVGGSFAIDMCVGSLAVFVW, and AVFMVPAVASGLICGDGIWTF.

It belongs to the YSL (TC 2.A.67.2) family. Expressed in roots of young maize seedlings. Not detected in leaves of iron-sufficient plants, but accumulates in roots and leaves of iron-deficient plants.

The protein localises to the membrane. In terms of biological role, involved in Fe(3+) uptake. Acts as a proton-coupled symporter for phytosiderophore- and nicotianamine-chelated metals. Capable of transporting either Fe(2+)-nicotianamine or Fe(3+)-phytosiderophore. May transport iron, zinc, nickel, copper and, at a lower rate, manganese and cadmium. The polypeptide is Iron-phytosiderophore transporter yellow stripe 1 (YS1) (Zea mays (Maize)).